A 376-amino-acid chain; its full sequence is Lateral eye opsin (376 aa).

Residues 1 to 46 (MANQLSYSSLGWPYQPNASVVDTMPKEMLYMIHEHWYAFPPMNPLW) lie on the Extracellular side of the membrane. N-linked (GlcNAc...) asparagine glycosylation is present at N17. A helical membrane pass occupies residues 47-71 (YSILGVAMIILGIICVLGNGMVIYL). At 72 to 83 (MMTTKSLRTPTN) the chain is on the cytoplasmic side. A helical membrane pass occupies residues 84 to 108 (LLVVNLAFSDFCMMAFMMPTMTSNC). Over 109 to 123 (FAETWILGPFMCEVY) the chain is Extracellular. An intrachain disulfide couples C120 to C197. The chain crosses the membrane as a helical span at residues 124 to 143 (GMAGSLFGCASIWSMVMITL). Residues 144-162 (DRYNVIVRGMAAAPLTHKK) lie on the Cytoplasmic side of the membrane. A helical transmembrane segment spans residues 163 to 186 (ATLLLLFVWIWSGGWTILPFFGWS). Residues 187–210 (RYVPEGNLTSCTVDYLTKDWSSAS) lie on the Extracellular side of the membrane. N193 is a glycosylation site (N-linked (GlcNAc...) asparagine). The helical transmembrane segment at 211–238 (YVVIYGLAVYFLPLITMIYCYFFIVHAV) threads the bilayer. Residues 239–274 (AEHEKQLREQAKKMNVASLRANADQQKQSAECRLAK) lie on the Cytoplasmic side of the membrane. Residues 275–298 (VAMMTVGLWFMAWTPYLIISWAGV) traverse the membrane as a helical segment. Over 299–306 (FSSGTRLT) the chain is Extracellular. The helical transmembrane segment at 307–331 (PLATIWGSVFAKANSCYNPIVYGIS) threads the bilayer. K318 carries the N6-(retinylidene)lysine modification. The Cytoplasmic portion of the chain corresponds to 332 to 376 (HPRYKAALYQRFPSLACGSGESGSDVKSEASATTTMEEKPKIPEA). The segment at 349–376 (GSGESGSDVKSEASATTTMEEKPKIPEA) is disordered. Basic and acidic residues predominate over residues 367 to 376 (MEEKPKIPEA).

The protein belongs to the G-protein coupled receptor 1 family. Opsin subfamily. In terms of processing, phosphorylated on some or all of the serine and threonine residues present in the C-terminal region. Lateral eye.

It is found in the membrane. In terms of biological role, visual pigments are the light-absorbing molecules that mediate vision. They consist of an apoprotein, opsin, covalently linked to cis-retinal. The polypeptide is Lateral eye opsin (Limulus polyphemus (Atlantic horseshoe crab)).